The following is a 484-amino-acid chain: Glutamate--tRNA ligase (484 aa).

The 'HIGH' region signature appears at 11 to 21; that stretch reads PSPTGYLHIGN. Residues 252-256 carry the 'KMSKS' region motif; sequence KLSKR. Lysine 255 is an ATP binding site.

This sequence belongs to the class-I aminoacyl-tRNA synthetase family. Glutamate--tRNA ligase type 1 subfamily. Monomer.

It localises to the cytoplasm. The catalysed reaction is tRNA(Glu) + L-glutamate + ATP = L-glutamyl-tRNA(Glu) + AMP + diphosphate. In terms of biological role, catalyzes the attachment of glutamate to tRNA(Glu) in a two-step reaction: glutamate is first activated by ATP to form Glu-AMP and then transferred to the acceptor end of tRNA(Glu). The sequence is that of Glutamate--tRNA ligase from Staphylococcus haemolyticus (strain JCSC1435).